The following is a 263-amino-acid chain: 3-deoxy-manno-octulosonate cytidylyltransferase 1 (263 aa).

Belongs to the KdsB family.

It is found in the cytoplasm. It catalyses the reaction 3-deoxy-alpha-D-manno-oct-2-ulosonate + CTP = CMP-3-deoxy-beta-D-manno-octulosonate + diphosphate. The protein operates within nucleotide-sugar biosynthesis; CMP-3-deoxy-D-manno-octulosonate biosynthesis; CMP-3-deoxy-D-manno-octulosonate from 3-deoxy-D-manno-octulosonate and CTP: step 1/1. Its pathway is bacterial outer membrane biogenesis; lipopolysaccharide biosynthesis. Functionally, activates KDO (a required 8-carbon sugar) for incorporation into bacterial lipopolysaccharide in Gram-negative bacteria. In Burkholderia ambifaria (strain ATCC BAA-244 / DSM 16087 / CCUG 44356 / LMG 19182 / AMMD) (Burkholderia cepacia (strain AMMD)), this protein is 3-deoxy-manno-octulosonate cytidylyltransferase 1.